The chain runs to 540 residues: Probable protein kinase UbiB (540 aa).

Residues Leu24 to Trp44 traverse the membrane as a helical segment. The region spanning Arg126–Leu494 is the Protein kinase domain. Residues Leu132–Val140 and Lys154 contribute to the ATP site. The active-site Proton acceptor is the Asp289. Transmembrane regions (helical) follow at residues Leu496 to Ala516 and Leu518 to Val538.

This sequence belongs to the ABC1 family. UbiB subfamily.

Its subcellular location is the cell inner membrane. It functions in the pathway cofactor biosynthesis; ubiquinone biosynthesis [regulation]. In terms of biological role, is probably a protein kinase regulator of UbiI activity which is involved in aerobic coenzyme Q (ubiquinone) biosynthesis. This Pseudomonas putida (strain ATCC 700007 / DSM 6899 / JCM 31910 / BCRC 17059 / LMG 24140 / F1) protein is Probable protein kinase UbiB.